The primary structure comprises 156 residues: Small ribosomal subunit protein uS7 (156 aa).

It belongs to the universal ribosomal protein uS7 family. Part of the 30S ribosomal subunit. Contacts proteins S9 and S11.

Its function is as follows. One of the primary rRNA binding proteins, it binds directly to 16S rRNA where it nucleates assembly of the head domain of the 30S subunit. Is located at the subunit interface close to the decoding center, probably blocks exit of the E-site tRNA. The protein is Small ribosomal subunit protein uS7 of Ruminiclostridium cellulolyticum (strain ATCC 35319 / DSM 5812 / JCM 6584 / H10) (Clostridium cellulolyticum).